The following is a 106-amino-acid chain: Protein yippee-like At4g27745 (106 aa).

The 98-residue stretch at 8–105 (RLYSCCNCRN…FEKAKIVKED (98 aa)) folds into the Yippee domain. Zn(2+) is bound by residues Cys-12, Cys-15, Cys-68, and Cys-71.

This sequence belongs to the yippee family.

In Arabidopsis thaliana (Mouse-ear cress), this protein is Protein yippee-like At4g27745.